We begin with the raw amino-acid sequence, 171 residues long: AP-3 complex subunit sigma (171 aa).

The protein belongs to the adaptor complexes small subunit family. As to quaternary structure, adaptor protein complex 3 (AP-3) is a heterotetramer composed of two large adaptins (delta-type subunit and beta-type subunit), a medium adaptin (mu-type subunit) and a small adaptin (sigma-type subunit).

Its subcellular location is the endosome membrane. Functionally, part of the AP-3 complex, an adaptor-related complex which is essential for the compartmentalization of the endocytic pathway. The protein is AP-3 complex subunit sigma (ap3s1) of Dictyostelium discoideum (Social amoeba).